The chain runs to 1179 residues: Protein turtle homolog A (1179 aa).

The first 20 residues, 1-20, serve as a signal peptide directing secretion; sequence MVWCLGLAVLSLVISQGADG. Over 21-734 the chain is Extracellular; the sequence is RGKPEVVSVV…TQLPGLLPQP (714 aa). Ig-like domains lie at 24–124, 136–216, 226–318, 322–410, and 418–502; these read PEVV…DFAN, PQFQ…GSAT, PPVI…AYLT, PAQV…SPVT, and PAFI…TNVY. Cystine bridges form between cysteine 41/cysteine 108, cysteine 158/cysteine 206, cysteine 248/cysteine 301, cysteine 344/cysteine 395, and cysteine 440/cysteine 486. N-linked (GlcNAc...) asparagine glycosylation is found at asparagine 188 and asparagine 256. Fibronectin type-III domains are found at residues 507 to 611 and 623 to 718; these read SPHV…TTPA and PLSP…TSGL. Asparagine 513 and asparagine 524 each carry an N-linked (GlcNAc...) asparagine glycan. The segment at 606-626 is disordered; that stretch reads LPTTPAAPGLPPTEIPPPLSP. Pro residues predominate over residues 613–626; it reads PGLPPTEIPPPLSP. The helical transmembrane segment at 735–755 threads the bilayer; the sequence is VLAGVVGGVCFLGVAVLVSIL. The Cytoplasmic segment spans residues 756–1179; sequence AGCLLNRRRA…VPHPEQATLL (424 aa). Disordered regions lie at residues 767–919, 940–988, and 1015–1079; these read RRRR…PLPG, DWPP…VVGA, and AAPR…KRRN. A compositionally biased stretch (low complexity) spans 785-800; it reads GKSAAPSALGSGSPDS. Position 809 is a phosphoserine (serine 809). 2 stretches are compositionally biased toward pro residues: residues 826–836 and 906–919; these read TPSPHPDPPSS and VAPP…PLPG. Threonine 972 is modified (phosphothreonine). Positions 1177–1179 match the PDZ-binding motif; the sequence is TLL.

This sequence belongs to the immunoglobulin superfamily. Turtle family. As to quaternary structure, interacts with MAGI2 and SHANK1.

Its subcellular location is the cell membrane. It is found in the synapse. In terms of biological role, functions in dendrite outgrowth and synapse maturation. The chain is Protein turtle homolog A (IGSF9) from Homo sapiens (Human).